A 239-amino-acid chain; its full sequence is Adapter protein MecA (239 aa).

Positions glutamate 118–glycine 128 are enriched in basic and acidic residues. Residues glutamate 118 to arginine 137 are disordered.

This sequence belongs to the MecA family. In terms of assembly, homodimer.

Its function is as follows. Enables the recognition and targeting of unfolded and aggregated proteins to the ClpC protease or to other proteins involved in proteolysis. In Staphylococcus aureus (strain Mu3 / ATCC 700698), this protein is Adapter protein MecA.